The sequence spans 809 residues: LPS-assembly protein LptD (809 aa).

The N-terminal stretch at 1 to 22 is a signal peptide; sequence MRRALRLLPLPLSIAICLPAMA.

Belongs to the LptD family. Component of the lipopolysaccharide transport and assembly complex. Interacts with LptE and LptA.

Its subcellular location is the cell outer membrane. Together with LptE, is involved in the assembly of lipopolysaccharide (LPS) at the surface of the outer membrane. This is LPS-assembly protein LptD from Xanthomonas euvesicatoria pv. vesicatoria (strain 85-10) (Xanthomonas campestris pv. vesicatoria).